Consider the following 403-residue polypeptide: NADH-quinone oxidoreductase subunit D (403 aa).

This sequence belongs to the complex I 49 kDa subunit family. NDH-1 is composed of 14 different subunits. Subunits NuoB, C, D, E, F, and G constitute the peripheral sector of the complex.

It localises to the cell inner membrane. The enzyme catalyses a quinone + NADH + 5 H(+)(in) = a quinol + NAD(+) + 4 H(+)(out). Its function is as follows. NDH-1 shuttles electrons from NADH, via FMN and iron-sulfur (Fe-S) centers, to quinones in the respiratory chain. The immediate electron acceptor for the enzyme in this species is believed to be ubiquinone. Couples the redox reaction to proton translocation (for every two electrons transferred, four hydrogen ions are translocated across the cytoplasmic membrane), and thus conserves the redox energy in a proton gradient. In Erythrobacter litoralis (strain HTCC2594), this protein is NADH-quinone oxidoreductase subunit D.